The chain runs to 306 residues: Oxygen-dependent coproporphyrinogen-III oxidase (306 aa).

Ser-94 is a substrate binding site. A divalent metal cation is bound by residues His-98 and His-108. The active-site Proton donor is the His-108. Asn-110 to Arg-112 contributes to the substrate binding site. 2 residues coordinate a divalent metal cation: His-147 and His-177. An important for dimerization region spans residues Tyr-242–Glu-277. Gly-260–Arg-262 serves as a coordination point for substrate.

The protein belongs to the aerobic coproporphyrinogen-III oxidase family. Homodimer. It depends on a divalent metal cation as a cofactor.

Its subcellular location is the cytoplasm. It carries out the reaction coproporphyrinogen III + O2 + 2 H(+) = protoporphyrinogen IX + 2 CO2 + 2 H2O. It participates in porphyrin-containing compound metabolism; protoporphyrin-IX biosynthesis; protoporphyrinogen-IX from coproporphyrinogen-III (O2 route): step 1/1. Involved in the heme biosynthesis. Catalyzes the aerobic oxidative decarboxylation of propionate groups of rings A and B of coproporphyrinogen-III to yield the vinyl groups in protoporphyrinogen-IX. This Shewanella woodyi (strain ATCC 51908 / MS32) protein is Oxygen-dependent coproporphyrinogen-III oxidase.